We begin with the raw amino-acid sequence, 437 residues long: Exosome complex component RRP45 (437 aa).

Phosphoserine is present on S65. Position 297 is an N6-acetyllysine; alternate (K297). K297 is covalently cross-linked (Glycyl lysine isopeptide (Lys-Gly) (interchain with G-Cter in SUMO1); alternate). K297 is covalently cross-linked (Glycyl lysine isopeptide (Lys-Gly) (interchain with G-Cter in SUMO2); alternate). Phosphoserine occurs at positions 306 and 346. Positions 339–437 (IGEGIENSWG…KRRKKKRTAN (99 aa)) are disordered. Over residues 349 to 363 (DLEDSEKEEEEEGGI) the composition is skewed to acidic residues. A phosphoserine mark is found at S392, S394, and S407. Residues 413–425 (AQTSANQKAPSKS) show a composition bias toward polar residues. Residues 426–437 (QGKRRKKKRTAN) show a composition bias toward basic residues.

It belongs to the RNase PH family. Component of the RNA exosome core complex (Exo-9), composed of EXOSC1, EXOSC2, EXOSC3, EXOSC4, EXOSC5, EXOSC6, EXOSC7, EXOSC8 and EXOSC9; within the complex interacts with EXOSC3, EXOSC4, EXOSC5 and DIS3. The catalytically inactive RNA exosome core complex (Exo-9) associates with the catalytic subunit EXOSC10/RRP6. Exo-9 may associate with DIS3 to form the nucleolar exosome complex, or DIS3L to form the cytoplasmic exosome complex. Exo-9 is formed by a hexameric base ring consisting of the heterodimers EXOSC4-EXOSC9, EXOSC5-EXOSC8 and EXOSC6-EXOSC7, and a cap ring consisting of EXOSC1, EXOSC2 and EXOSC3. The RNA exosome complex associates with cofactors C1D/RRP47, MPHOSPH6/MPP6 and MTREX/MTR4. Interacts (via C-terminus region) with SETX (via N-terminus domain); the interaction enhances SETX sumoylation. Interacts with DIS3; the interaction is direct.

The protein resides in the cytoplasm. It is found in the nucleus. It localises to the nucleolus. The protein localises to the nucleoplasm. Functionally, non-catalytic component of the RNA exosome complex which has 3'-&gt;5' exoribonuclease activity and participates in a multitude of cellular RNA processing and degradation events. In the nucleus, the RNA exosome complex is involved in proper maturation of stable RNA species such as rRNA, snRNA and snoRNA, in the elimination of RNA processing by-products and non-coding 'pervasive' transcripts, such as antisense RNA species and promoter-upstream transcripts (PROMPTs), and of mRNAs with processing defects, thereby limiting or excluding their export to the cytoplasm. The RNA exosome may be involved in Ig class switch recombination (CSR) and/or Ig variable region somatic hypermutation (SHM) by targeting AICDA deamination activity to transcribed dsDNA substrates. In the cytoplasm, the RNA exosome complex is involved in general mRNA turnover and specifically degrades inherently unstable mRNAs containing AU-rich elements (AREs) within their 3' untranslated regions, and in RNA surveillance pathways, preventing translation of aberrant mRNAs. It seems to be involved in degradation of histone mRNA. The catalytic inactive RNA exosome core complex of 9 subunits (Exo-9) is proposed to play a pivotal role in the binding and presentation of RNA for ribonucleolysis, and to serve as a scaffold for the association with catalytic subunits and accessory proteins or complexes. EXOSC9 binds to ARE-containing RNAs. In Rattus norvegicus (Rat), this protein is Exosome complex component RRP45 (Exosc9).